Here is a 435-residue protein sequence, read N- to C-terminus: Cell adhesion molecule 2 (435 aa).

Positions 1-24 (MIWKRSAVLRFYSVCGLLLQGSQG) are cleaved as a signal peptide. Over 25–367 (QFPLTQNVTV…ALAGQNGPDH (343 aa)) the chain is Extracellular. Residues 27–119 (PLTQNVTVVE…PVKTSKAYLT (93 aa)) form the Ig-like V-type domain. N-linked (GlcNAc...) asparagine glycosylation is found at asparagine 31 and asparagine 51. Cystine bridges form between cysteine 44–cysteine 104, cysteine 146–cysteine 203, and cysteine 248–cysteine 296. 2 Ig-like C2-type domains span residues 127–219 (PQIS…VAMQ) and 227–312 (PSVK…YVLI). An N-linked (GlcNAc...) asparagine glycan is attached at asparagine 291. A helical membrane pass occupies residues 368–388 (ALIGGIVAVVVFVTLCSIFLL). The Cytoplasmic portion of the chain corresponds to 389 to 435 (GRYLARHKGTYLTNEAKGAEDAPDADTAIINAEGSQVNAEEKKEYFI). Phosphoserine is present on serine 423.

The protein belongs to the nectin family.

It localises to the cell membrane. The protein resides in the synapse. The protein localises to the cell projection. Its subcellular location is the axon. In terms of biological role, adhesion molecule that engages in homo- and heterophilic interactions with the other nectin-like family members, leading to cell aggregation. Important for synapse organization, providing regulated trans-synaptic adhesion. Preferentially binds to oligodendrocytes. (Microbial infection) Induces cell fusion in neuron infected by a neuropathogenic strain of measles. Interacts with measles hemagglutinin to trigger hyperfusogenic F-mediated membrane fusion and presumably transsynaptic cell-to-cell transmission of the virus. The chain is Cell adhesion molecule 2 (CADM2) from Homo sapiens (Human).